Consider the following 1614-residue polypeptide: Protein scribble homolog (1614 aa).

Residues methionine 1–glutamate 809 form a sufficient for targeting to adherens junction and to inhibit cell proliferation region. 17 LRR repeats span residues asparagine 11–tyrosine 34, serine 35–leucine 58, leucine 59–phenylalanine 81, glutamine 83–lysine 105, leucine 107–leucine 127, arginine 128–leucine 150, alanine 151–leucine 173, valine 174–leucine 196, proline 197–leucine 219, arginine 221–leucine 242, leucine 243–leucine 265, glutamine 267–cysteine 288, glutamate 289–leucine 311, threonine 312–cysteine 334, alanine 336–threonine 357, glutamate 359–leucine 380, and leucine 382–glutamine 405. Position 37 is a phosphoserine (serine 37). Threonine 378 is modified (phosphothreonine). Disordered regions lie at residues proline 417–proline 441, glycine 462–arginine 608, and alanine 636–alanine 692. A compositionally biased stretch (polar residues) spans glycine 428–tryptophan 437. Phosphothreonine is present on threonine 475. Residues serine 479–glutamate 494 show a composition bias toward basic and acidic residues. The span at threonine 516 to glutamine 533 shows a compositional bias: polar residues. Residues glutamine 548–glutamate 557 show a composition bias toward low complexity. Positions glutamate 662–glutamate 686 are enriched in acidic residues. A coiled-coil region spans residues glutamate 664–serine 691. Phosphoserine is present on residues serine 699 and serine 755. The interval isoleucine 708–arginine 1219 is interaction with ARHGEF7. The PDZ 1 domain occupies threonine 719 to arginine 806. The tract at residues threonine 719 to threonine 1184 is required for interaction with VIM. Threonine 817 is subject to Phosphothreonine. Serine 826, serine 866, and serine 930 each carry phosphoserine. Residues valine 853–alanine 941 form the PDZ 2 domain. Positions glutamate 940–glutamate 971 are disordered. The span at proline 944 to threonine 959 shows a compositional bias: pro residues. Positions alanine 960–proline 969 are enriched in low complexity. PDZ domains follow at residues glutamate 994–proline 1083 and glutamate 1090–valine 1178. Serine 1130, serine 1210, serine 1213, serine 1216, serine 1222, serine 1260, serine 1268, and serine 1271 each carry phosphoserine. Positions valine 1214–glutamate 1448 are disordered. The span at isoleucine 1217–proline 1232 shows a compositional bias: basic and acidic residues. Threonine 1304 bears the Phosphothreonine mark. Serine 1310 carries the post-translational modification Phosphoserine. Over residues serine 1315–valine 1327 the composition is skewed to basic and acidic residues. Serine 1340 is subject to Phosphoserine. The stretch at leucine 1341–glutamate 1368 forms a coiled coil. Basic and acidic residues predominate over residues aspartate 1345–lysine 1357. A compositionally biased stretch (acidic residues) spans leucine 1378–glutamate 1390. The segment covering glycine 1396 to proline 1408 has biased composition (low complexity). Residues serine 1402 and serine 1405 each carry the phosphoserine modification. Residues alanine 1418 to arginine 1429 are compositionally biased toward basic and acidic residues. Phosphoserine is present on residues serine 1432, serine 1445, and serine 1467. Residues glutamine 1476 to leucine 1524 form a disordered region. Residues glutamine 1483 to alanine 1496 show a composition bias toward basic and acidic residues. At serine 1500 the chain carries Phosphoserine. Threonine 1504 bears the Phosphothreonine mark. A phosphoserine mark is found at serine 1506, serine 1520, and serine 1550. The segment at glycine 1581–serine 1614 is disordered.

It belongs to the LAP (LRR and PDZ) protein family. Interacts with UBE3A. Interacts with PAK1 and PAK2. Interacts (via PDZ domains) with VANGL2. Interacts (via PDZ domains) with LPP and TRIP6; the interaction is direct. Interacts (via PDZ domains) with TJP2. Interacts (via PDZ domains) with APC; may mediate APC targeting to adherens junctions of epithelial cells. Interacts (via PDZ domains) with TSHR; regulates TSHR trafficking and function. Interacts with ARHGEF7 and GIT1; interacts directly with ARHGEF7. Interacts with CTNNB1. Interacts with MAPK12. Interacts (via PDZ domains 1 and 3) with MCC. Interacts with DLG5. Interacts with STK4/MST1 and LATS1 in the presence of DLG5. Interacts (via PDZ domain 3) with CRTAM (via PDZ-binding motif); the interaction promotes CRTAM and SCRIB polarization in a subset of CD4+ T-cells. Interacts with YES1, when YES1 is in a closed conformation; the interaction facilitates YES1 autophosphorylation. Interacts (via PDZ domains) with VIM; the interaction protects SCRIB from proteasomal degradation and facilitates SCRIB localization to intermediate filaments, the interaction is reduced by cell contact inhibition. Post-translationally, ubiquitinated; targeted for UBE3A-dependent multiubiquitination and degraded. In terms of processing, palmitoylated. Could be depalmitoylated by LYPLA1 and/or LYPLA2. Palmitoylation of SCRIB by ZDHHC7 is required for its localization to cell-cell junctions, function in the establishement of epithelial cell polarity and the regulation of downstream signaling pathways important for epithelial cell differentiation.

It localises to the cell membrane. It is found in the cell junction. The protein resides in the adherens junction. Its subcellular location is the cell projection. The protein localises to the lamellipodium. It localises to the cytoplasm. It is found in the postsynapse. The protein resides in the presynapse. Its function is as follows. Scaffold protein involved in different aspects of polarized cell differentiation regulating epithelial and neuronal morphogenesis and T-cell polarization. Via its interaction with CRTAM, required for the late phase polarization of a subset of CD4+ T-cells, which in turn regulates TCR-mediated proliferation and IFNG and IL22 production. Plays a role in cell directional movement, cell orientation, cell sheet organization and Golgi complex polarization at the cell migration front. Promotes epithelial cell layer barrier function via maintaining cell-cell adhesion. Most probably functions in the establishment of apico-basal cell polarity. May function in cell proliferation regulating progression from G1 to S phase and as a positive regulator of apoptosis for instance during acinar morphogenesis of the mammary epithelium. May regulate cell invasion via MAPK-mediated cell migration and adhesion. May play a role in exocytosis and in the targeting of synaptic vesicles to synapses. Functions as an activator of Rac GTPase activity. The sequence is that of Protein scribble homolog from Canis lupus familiaris (Dog).